Reading from the N-terminus, the 229-residue chain is Sugar fermentation stimulation protein homolog (229 aa).

It belongs to the SfsA family.

The polypeptide is Sugar fermentation stimulation protein homolog (Caldanaerobacter subterraneus subsp. tengcongensis (strain DSM 15242 / JCM 11007 / NBRC 100824 / MB4) (Thermoanaerobacter tengcongensis)).